We begin with the raw amino-acid sequence, 235 residues long: Aspartate/glutamate leucyltransferase (235 aa).

Belongs to the R-transferase family. Bpt subfamily.

The protein resides in the cytoplasm. The catalysed reaction is N-terminal L-glutamyl-[protein] + L-leucyl-tRNA(Leu) = N-terminal L-leucyl-L-glutamyl-[protein] + tRNA(Leu) + H(+). The enzyme catalyses N-terminal L-aspartyl-[protein] + L-leucyl-tRNA(Leu) = N-terminal L-leucyl-L-aspartyl-[protein] + tRNA(Leu) + H(+). Functions in the N-end rule pathway of protein degradation where it conjugates Leu from its aminoacyl-tRNA to the N-termini of proteins containing an N-terminal aspartate or glutamate. The protein is Aspartate/glutamate leucyltransferase of Pseudomonas syringae pv. tomato (strain ATCC BAA-871 / DC3000).